The following is a 239-amino-acid chain: MINDVISPEFDENGRALRRIRSFVRRQGRLTKGQQLALDSYWPVMGVEYQAAPVDLNTLFGREAPVVLEIGFGMGTSLVTMAANNPQQNFLGIEVHSPGVGACLSSAHDAGLSNLRIMCHDAVEVLENMIPEASLDMVQLFFPDPWHKARHNKRRIVQTPFVELVKSKLKVGGVFHMATDWQPYAEHMLEVMSGVSGYLNLSEQNDYVPRPDSRPLTKFELRGQRLGHGVWDLMFERKE.

Residues Glu-69, Glu-94, Asp-121, and Asp-144 each coordinate S-adenosyl-L-methionine. Residue Asp-144 is part of the active site. Substrate is bound at residue Lys-148. Residues 150–155 (RHNKRR) are interaction with RNA. Substrate is bound by residues Asp-180 and 217 to 220 (TKFE).

Belongs to the class I-like SAM-binding methyltransferase superfamily. TrmB family. Monomer.

It catalyses the reaction guanosine(46) in tRNA + S-adenosyl-L-methionine = N(7)-methylguanosine(46) in tRNA + S-adenosyl-L-homocysteine. It participates in tRNA modification; N(7)-methylguanine-tRNA biosynthesis. In terms of biological role, catalyzes the formation of N(7)-methylguanine at position 46 (m7G46) in tRNA. The polypeptide is tRNA (guanine-N(7)-)-methyltransferase (Yersinia pseudotuberculosis serotype I (strain IP32953)).